The sequence spans 318 residues: Acetaldehyde dehydrogenase 2 (318 aa).

9-12 (SGNI) serves as a coordination point for NAD(+). Catalysis depends on cysteine 129, which acts as the Acyl-thioester intermediate. Residues 160–168 (SAGPGTRAN) and asparagine 288 each bind NAD(+).

This sequence belongs to the acetaldehyde dehydrogenase family.

It catalyses the reaction acetaldehyde + NAD(+) + CoA = acetyl-CoA + NADH + H(+). The chain is Acetaldehyde dehydrogenase 2 from Mycolicibacterium vanbaalenii (strain DSM 7251 / JCM 13017 / BCRC 16820 / KCTC 9966 / NRRL B-24157 / PYR-1) (Mycobacterium vanbaalenii).